The following is a 532-amino-acid chain: Collagen alpha-1(XXIII) chain (532 aa).

Topologically, residues 1–23 (MGAGERAAGGGGAQDPGAGCGSR) are cytoplasmic. Residues 24-45 (ALSALCLLLSVGSAAACLLLGA) traverse the membrane as a helical; Signal-anchor for type II membrane protein segment. At 46 to 532 (QAAALHGRVA…GLPVPGCWHK (487 aa)) the chain is on the extracellular side. Disordered regions lie at residues 102–296 (PSEC…GEQG) and 308–532 (LDAL…CWHK). Collagen-like domains are found at residues 108-166 (PPGP…RGAQ), 173-232 (GPPG…PGKK), 240-298 (QPGL…QGDT), and 313-372 (GPPG…MGLS). Positions 129–145 (QSGRDGYPGPLGLDGKP) are enriched in low complexity. Over residues 174–184 (PPGPPGPPGAR) the composition is skewed to pro residues. Low complexity predominate over residues 196-207 (RGAQGPAGPRGE). Over residues 314-326 (PPGPQGAPGPPGI) the composition is skewed to pro residues. 2 stretches are compositionally biased toward basic and acidic residues: residues 342-354 (DGEKGPKGPKGDP) and 380-393 (PKGEKGESASDHLQ). Residues 403-414 (PGPPGPPGPPGP) are compositionally biased toward pro residues. Collagen-like domains follow at residues 404–452 (GPPG…GPPG) and 455–514 (GLPG…PGLD). Basic and acidic residues-rich tracts occupy residues 427 to 441 (DGAKGEKGTSGERGP) and 478 to 495 (RGEKGDRSERGEKGERGV).

In terms of assembly, homotrimer. Post-translationally, undergoes proteolytic cleavage by furin protease to yield a 60 kDa soluble form that forms a homotrimer and exhibits a low affinity interaction with heparin.

It is found in the cell membrane. The sequence is that of Collagen alpha-1(XXIII) chain (Col23a1) from Mus musculus (Mouse).